Reading from the N-terminus, the 326-residue chain is Glutaminase 2 (326 aa).

The substrate site is built by Ser-73, Asn-125, Glu-169, Asn-176, Tyr-200, Tyr-252, and Val-270.

This sequence belongs to the glutaminase family. As to quaternary structure, homotetramer.

The enzyme catalyses L-glutamine + H2O = L-glutamate + NH4(+). The chain is Glutaminase 2 from Bacillus anthracis.